An 865-amino-acid polypeptide reads, in one-letter code: Bifunctional uridylyltransferase/uridylyl-removing enzyme (865 aa).

Residues 1–318 are uridylyltransferase; the sequence is MPHVDLNPLK…FPRPDSDARL (318 aa). The segment at 319–675 is uridylyl-removing; it reads IDDDFRNLRE…VRPTEHGEGL (357 aa). An HD domain is found at 437–559; it reads VDQHTLAVVR…VGDERRLAAL (123 aa). ACT domains follow at residues 676 to 762 and 789 to 865; these read QVMV…RLPH and RLSV…QQAA. The tract at residues 747-767 is disordered; it reads DPHAARHAHAPRRLPHSHARR. Positions 751-767 are enriched in basic residues; the sequence is ARHAHAPRRLPHSHARR.

The protein belongs to the GlnD family. Requires Mg(2+) as cofactor.

It carries out the reaction [protein-PII]-L-tyrosine + UTP = [protein-PII]-uridylyl-L-tyrosine + diphosphate. It catalyses the reaction [protein-PII]-uridylyl-L-tyrosine + H2O = [protein-PII]-L-tyrosine + UMP + H(+). With respect to regulation, uridylyltransferase (UTase) activity is inhibited by glutamine, while glutamine activates uridylyl-removing (UR) activity. Modifies, by uridylylation and deuridylylation, the PII regulatory proteins (GlnB and homologs), in response to the nitrogen status of the cell that GlnD senses through the glutamine level. Under low glutamine levels, catalyzes the conversion of the PII proteins and UTP to PII-UMP and PPi, while under higher glutamine levels, GlnD hydrolyzes PII-UMP to PII and UMP (deuridylylation). Thus, controls uridylylation state and activity of the PII proteins, and plays an important role in the regulation of nitrogen assimilation and metabolism. The chain is Bifunctional uridylyltransferase/uridylyl-removing enzyme from Bordetella parapertussis (strain 12822 / ATCC BAA-587 / NCTC 13253).